Here is a 338-residue protein sequence, read N- to C-terminus: Putative peptide import ATP-binding protein BruAb2_0796 (338 aa).

The ABC transporter domain maps to 7 to 263 (LDIEGLRTVF…PRHPYTMGLL (257 aa)). 43 to 50 (GESGSGKS) is an ATP binding site.

Belongs to the ABC transporter superfamily. The complex is composed of two ATP-binding proteins (BruAb2_0796 and BruAb2_0797), two transmembrane proteins (BruAb2_0794) and a solute-binding protein (BruAb2_0792).

The protein localises to the cell inner membrane. In terms of biological role, probably part of an ABC transporter complex that could be involved in peptide import. Probably responsible for energy coupling to the transport system. The chain is Putative peptide import ATP-binding protein BruAb2_0796 from Brucella abortus biovar 1 (strain 9-941).